The following is a 367-amino-acid chain: MAVANLTSEQAVLNEVARQDRNRRAIRIWLGCVLLALFALVLVGGATRLTESGLSITQWQPIHGVIPPLNAQEWQEEFDLYKRIPQFQLLNKDMTVDEFKGIFWWEWAHRFLARAMGVIFGVPLLFFVLTGRVERKLWLPLGGIFLLGGLQGAIGWWMVSSGLQARTDVSQYRLATHLVTACLIFASCMWFMRALSPHSNEPAPTRYSAKLAGLIAFMSLFQIYLGALVAGLDAGMSYNTWPLMDGAVVPGGLFVQSPGWINFFENPKMVQYVHRLGAYALFAVVAVNMIISLRAAAETTHARRSVVLFVLVLIQAILGITTLLLQVPLHLALTHQAGALIVFGFAIANWRGFYGEYPRQTVIAVRD.

The next 5 helical transmembrane spans lie at 25–45 (AIRI…LVGG), 111–131 (FLAR…VLTG), 137–157 (LWLP…IGWW), 174–194 (LATH…FMRA), and 211–231 (LAGL…LVAG). Position 274 (histidine 274) interacts with heme. The next 3 membrane-spanning stretches (helical) occupy residues 276 to 296 (LGAY…LRAA), 305 to 325 (SVVL…TLLL), and 327 to 347 (VPLH…GFAI). Residue histidine 335 participates in heme binding.

This sequence belongs to the COX15/CtaA family. Type 2 subfamily. In terms of assembly, interacts with CtaB. It depends on heme b as a cofactor.

It localises to the cell membrane. It carries out the reaction Fe(II)-heme o + 2 A + H2O = Fe(II)-heme a + 2 AH2. The protein operates within porphyrin-containing compound metabolism; heme A biosynthesis; heme A from heme O: step 1/1. Functionally, catalyzes the conversion of heme O to heme A by two successive hydroxylations of the methyl group at C8. The first hydroxylation forms heme I, the second hydroxylation results in an unstable dihydroxymethyl group, which spontaneously dehydrates, resulting in the formyl group of heme A. The sequence is that of Heme A synthase from Rhizobium rhizogenes (strain K84 / ATCC BAA-868) (Agrobacterium radiobacter).